The chain runs to 984 residues: Ephrin type-B receptor 1 (984 aa).

The signal sequence occupies residues 1–17; it reads MALDCLLLFLLASAVAA. The Extracellular segment spans residues 18-540; sequence MEETLMDTRT…YKSELREQLP (523 aa). The region spanning 19 to 201 is the Eph LBD domain; the sequence is EETLMDTRTA…FFKKCPSIVQ (183 aa). 2 consecutive Fibronectin type-III domains span residues 322-432 and 433-528; these read VPSG…TNQA and APST…TLTD. N-linked (GlcNAc...) asparagine glycans are attached at residues asparagine 334, asparagine 426, and asparagine 480. Residues 541 to 563 form a helical membrane-spanning segment; sequence LIAGSAAAGVVFVVSLVAISIVC. Over 564-984 the chain is Cytoplasmic; that stretch reads SRKRAYSKEA…QMNQSPSVMA (421 aa). The residue at position 600 (tyrosine 600) is a Phosphotyrosine. In terms of domain architecture, Protein kinase spans 619 to 882; that stretch reads VKIEEVIGAG…EIVNTLDKMI (264 aa). ATP contacts are provided by residues 625 to 633 and lysine 651; that span reads IGAGEFGEV. Aspartate 744 acts as the Proton acceptor in catalysis. The 65-residue stretch at 911 to 975 folds into the SAM domain; it reads TAFTTVDDWL…LSSIHSMRVQ (65 aa). Tyrosine 928 is subject to Phosphotyrosine; by autocatalysis. The short motif at 982-984 is the PDZ-binding element; it reads VMA.

It belongs to the protein kinase superfamily. Tyr protein kinase family. Ephrin receptor subfamily. In terms of assembly, heterotetramer upon binding of the ligand. The heterotetramer is composed of an ephrin dimer and a receptor dimer. Oligomerization is probably required to induce biological responses. Interacts with EPHB6; transphosphorylates EPHB6 to form an active signaling complex. Interacts with PICK1. Interacts (through Tyr-594) with NCK1 (via SH2 domain); activates the JUN cascade to regulate cell adhesion. The ligand-activated form interacts (through Tyr-928) with GRB7 and GRB10 (via SH2 domains). The ligand-activated form interacts (residues within the catalytic domain) with GRB2 (via SH2 domain). Interacts with GRB2, SHC1 and SRC; activates the MAPK/ERK cascade to regulate cell migration. Interacts with CBL; regulates receptor degradation through ubiquitination. Interacts with ACP1. Phosphorylated. Autophosphorylation is stimulated by the ligand EFNB1. Required for interaction with SH2 domain-containing interactors, for activation of the MAPK/ERK and JUN signaling cascades and for ubiquitination by CBL. Post-translationally, ubiquitinated; (EFNB1)ligand-induced poly- and/or multi-ubiquitination by CBL is regulated by SRC and leads to lysosomal degradation. In terms of tissue distribution, restricted to brain and testes.

It localises to the cell membrane. It is found in the early endosome membrane. The protein localises to the cell projection. Its subcellular location is the dendrite. It catalyses the reaction L-tyrosyl-[protein] + ATP = O-phospho-L-tyrosyl-[protein] + ADP + H(+). Receptor tyrosine kinase which binds promiscuously transmembrane ephrin-B family ligands residing on adjacent cells, leading to contact-dependent bidirectional signaling into neighboring cells. The signaling pathway downstream of the receptor is referred to as forward signaling while the signaling pathway downstream of the ephrin ligand is referred to as reverse signaling. Cognate/functional ephrin ligands for this receptor include EFNB1, EFNB2 and EFNB3. During nervous system development, regulates retinal axon guidance redirecting ipsilaterally ventrotemporal retinal ganglion cells axons at the optic chiasm midline. This probably requires repulsive interaction with EFNB2. In the adult nervous system together with EFNB3, regulates chemotaxis, proliferation and polarity of the hippocampus neural progenitors. In addition to its role in axon guidance also plays an important redundant role with other ephrin-B receptors in development and maturation of dendritic spines and synapse formation. May also regulate angiogenesis. More generally, may play a role in targeted cell migration and adhesion. Upon activation by EFNB1 and probably other ephrin-B ligands activates the MAPK/ERK and the JNK signaling cascades to regulate cell migration and adhesion respectively. Involved in the maintenance of the pool of satellite cells (muscle stem cells) by promoting their self-renewal and reducing their activation and differentiation. In Rattus norvegicus (Rat), this protein is Ephrin type-B receptor 1 (Ephb1).